Reading from the N-terminus, the 327-residue chain is Phosphate acyltransferase (327 aa).

Belongs to the PlsX family. As to quaternary structure, homodimer. Probably interacts with PlsY.

It localises to the cytoplasm. The catalysed reaction is a fatty acyl-[ACP] + phosphate = an acyl phosphate + holo-[ACP]. It functions in the pathway lipid metabolism; phospholipid metabolism. Catalyzes the reversible formation of acyl-phosphate (acyl-PO(4)) from acyl-[acyl-carrier-protein] (acyl-ACP). This enzyme utilizes acyl-ACP as fatty acyl donor, but not acyl-CoA. The protein is Phosphate acyltransferase of Thermosipho africanus (strain TCF52B).